We begin with the raw amino-acid sequence, 435 residues long: GTPase Der (435 aa).

EngA-type G domains lie at proline 4–aspartate 167 and isoleucine 175–threonine 350. GTP contacts are provided by residues glycine 10–serine 17, aspartate 57–isoleucine 61, asparagine 119–aspartate 122, glycine 181–serine 188, aspartate 228–isoleucine 232, and asparagine 293–aspartate 296. Positions arginine 351 to lysine 435 constitute a KH-like domain.

This sequence belongs to the TRAFAC class TrmE-Era-EngA-EngB-Septin-like GTPase superfamily. EngA (Der) GTPase family. As to quaternary structure, associates with the 50S ribosomal subunit.

Functionally, GTPase that plays an essential role in the late steps of ribosome biogenesis. The sequence is that of GTPase Der from Lacticaseibacillus casei (strain BL23) (Lactobacillus casei).